The sequence spans 168 residues: Photosystem I assembly protein Ycf3 (168 aa).

TPR repeat units follow at residues Ala35–Pro68, Ser72–Leu105, and Gly120–Asn153.

Belongs to the Ycf3 family.

It is found in the plastid. Its subcellular location is the chloroplast thylakoid membrane. Its function is as follows. Essential for the assembly of the photosystem I (PSI) complex. May act as a chaperone-like factor to guide the assembly of the PSI subunits. The chain is Photosystem I assembly protein Ycf3 from Drimys granadensis.